The chain runs to 547 residues: Phosphomethylpyrimidine synthase (547 aa).

Substrate contacts are provided by residues Asn-146, Met-175, Tyr-204, His-240, 260-262 (SRG), 301-304 (DGLR), and Glu-340. His-344 is a Zn(2+) binding site. Tyr-367 is a substrate binding site. Position 408 (His-408) interacts with Zn(2+). The [4Fe-4S] cluster site is built by Cys-488, Cys-491, and Cys-496.

This sequence belongs to the ThiC family. The cofactor is [4Fe-4S] cluster.

The catalysed reaction is 5-amino-1-(5-phospho-beta-D-ribosyl)imidazole + S-adenosyl-L-methionine = 4-amino-2-methyl-5-(phosphooxymethyl)pyrimidine + CO + 5'-deoxyadenosine + formate + L-methionine + 3 H(+). It functions in the pathway cofactor biosynthesis; thiamine diphosphate biosynthesis. In terms of biological role, catalyzes the synthesis of the hydroxymethylpyrimidine phosphate (HMP-P) moiety of thiamine from aminoimidazole ribotide (AIR) in a radical S-adenosyl-L-methionine (SAM)-dependent reaction. This Mycobacterium bovis (strain ATCC BAA-935 / AF2122/97) protein is Phosphomethylpyrimidine synthase.